Reading from the N-terminus, the 318-residue chain is Glutathione synthetase (318 aa).

The region spanning 133-317 (KMYALQFTSV…LGQQVMAWLF (185 aa)) is the ATP-grasp domain. An ATP-binding site is contributed by 159-215 (VQQQGMAVLKPLGGKGGEGILFLQAGDRNLNSMIEISTQRGQLPVMLQEYLPAAKEG). Mg(2+) is bound by residues E288 and N290.

The protein belongs to the prokaryotic GSH synthase family. Mg(2+) is required as a cofactor. The cofactor is Mn(2+).

The catalysed reaction is gamma-L-glutamyl-L-cysteine + glycine + ATP = glutathione + ADP + phosphate + H(+). The protein operates within sulfur metabolism; glutathione biosynthesis; glutathione from L-cysteine and L-glutamate: step 2/2. The protein is Glutathione synthetase of Thermosynechococcus vestitus (strain NIES-2133 / IAM M-273 / BP-1).